The sequence spans 64 residues: Alpha-conotoxin-like Lp1.8 (64 aa).

The N-terminal stretch at 1 to 21 is a signal peptide; the sequence is MGMRMMFTMFLLVVLTTTVVS. The propeptide occupies 22-41; the sequence is FNSDRESNHENRRTSNQITR. Intrachain disulfides connect Cys47–Cys53 and Cys48–Cys61. The segment at 49 to 51 is lacks the Ser-Xaa-Pro motif that is crucial for potent interaction with nAChR; it reads KDP.

The protein belongs to the conotoxin A superfamily. As to expression, expressed by the venom duct.

The protein resides in the secreted. Its function is as follows. Alpha-conotoxins act on postsynaptic membranes, they bind to the nicotinic acetylcholine receptors (nAChR) and thus inhibit them. Has possibly a distinct nAChR binding mode from other alpha-conotoxins, due to a different three residue motif (Lys-Xaa-Pro instead of the conserved Ser-Xaa-Pro motif). The sequence is that of Alpha-conotoxin-like Lp1.8 from Conus leopardus (Leopard cone).